The primary structure comprises 670 residues: Solute carrier organic anion transporter family member 1A5 (670 aa).

Topologically, residues 1-20 are cytoplasmic; that stretch reads MGETEKRIATHGVRCFSKIK. The helical transmembrane segment at 21–40 threads the bilayer; that stretch reads MFLLALTCAYVSKSLSGIYM. The Extracellular segment spans residues 41–59; the sequence is NSMLTQIERQFDIPTSIVG. The chain crosses the membrane as a helical span at residues 60-80; sequence LINGSFEIGNLLLIILVSYFG. At 81-86 the chain is on the cytoplasmic side; the sequence is TKLHRP. A helical membrane pass occupies residues 87-111; the sequence is IMIGIGCVIMGLGCFLMSLPHFLMG. Residues 112 to 155 lie on the Extracellular side of the membrane; it reads RYEYETTISPTSNLSSNSFLCMENRTQTLKPTQDPAECVKEMKS. 2 N-linked (GlcNAc...) asparagine glycosylation sites follow: N124 and N135. Residues 156-184 form a helical membrane-spanning segment; that stretch reads LMWIYVLVGNIIRGIGETPIMPLGISYIE. Residues 185–203 lie on the Cytoplasmic side of the membrane; that stretch reads DFAKSENSPLYIGILESGK. Residues 204–224 form a helical membrane-spanning segment; sequence MIGPIVGLLLGSFCARIYVDT. At 225 to 242 the chain is on the extracellular side; it reads GSVNTDDLTITPTDTRWV. Residues 243-267 traverse the membrane as a helical segment; it reads GAWWIGFLVCAGVNILTSIPFFFFP. Over 268 to 311 the chain is Cytoplasmic; it reads KTLPKEGLQDNVARTENDKEEKHREKAKEENRGITKDFLPFMKS. Residues 312–333 traverse the membrane as a helical segment; the sequence is LSCNPIYMLLILTSVLQINAFI. Residues 334–353 lie on the Extracellular side of the membrane; that stretch reads NMFTFLPKYLEQQYGKSTSE. Residues 354–377 form a helical membrane-spanning segment; it reads VVLLIGVCNLPPICIGYLLIGFIM. The Cytoplasmic segment spans residues 378–381; that stretch reads KKFR. A helical transmembrane segment spans residues 382–405; it reads ITVKKAAYMAFCLSLFEYLLSYFH. The Extracellular segment spans residues 406–513; sequence FMISCDNFQV…PECANKLQYF (108 aa). Residues 433–488 enclose the Kazal-like domain; sequence NKVLADCNTRCSCLTNTWDPVCGDNGLSYMSACLAGCEKSVGMGTHMVFQNCSCIQ. Cystine bridges form between C439–C469, C445–C465, and C454–C486. 2 N-linked (GlcNAc...) asparagine glycosylation sites follow: N483 and N492. Residues 514 to 536 form a helical membrane-spanning segment; sequence LIMSVIGSFIYSITAIPGYMVLL. Over 537–545 the chain is Cytoplasmic; the sequence is RCIKSEEKS. Residues 546 to 571 form a helical membrane-spanning segment; that stretch reads LGIGLHAFCTRIFAGIPAPIYFGALI. At 572–605 the chain is on the extracellular side; it reads DRTCLHWGTLKCGEPGACRIYNINNFRRIYLVLP. Residues 606–623 form a helical membrane-spanning segment; sequence AALRGSSYLPAFFILILM. The Cytoplasmic portion of the chain corresponds to 624-670; the sequence is RKFQLPGEMYSSETELADMKQTVKKSECTDVHGIPKVENDGELKTKL.

Belongs to the organo anion transporter (TC 2.A.60) family. Expressed in brain, choroid plexus and lung, but not in liver or kidney.

Its subcellular location is the cell membrane. It localises to the basal cell membrane. The catalysed reaction is taurocholate(out) = taurocholate(in). The enzyme catalyses glycocholate(out) = glycocholate(in). It carries out the reaction taurochenodeoxycholate(out) = taurochenodeoxycholate(in). It catalyses the reaction tauroursodeoxycholate(out) = tauroursodeoxycholate(in). The catalysed reaction is 3,3',5'-triiodo-L-thyronine(out) = 3,3',5'-triiodo-L-thyronine(in). The enzyme catalyses L-thyroxine(out) = L-thyroxine(in). It carries out the reaction taurodeoxycholate(out) = taurodeoxycholate(in). It catalyses the reaction glycodeoxycholate(out) = glycodeoxycholate(in). The catalysed reaction is glycochenodeoxycholate(out) = glycochenodeoxycholate(in). The enzyme catalyses glycoursodeoxycholate(out) = glycoursodeoxycholate(in). It carries out the reaction estrone 3-sulfate(out) = estrone 3-sulfate(in). It catalyses the reaction prostaglandin E2(out) = prostaglandin E2(in). The catalysed reaction is substance P(out) = substance P(in). Na(+)-independent transporter that mediates the cellular uptake of a broad range of organic anions such as the endogenous bile salts cholate and deoxycholate, either in their unconjugated or conjugated forms (taurocholate and glycocholate), estrone 3-sulfate and prostaglandin E2, at the plasma membrane. Responsible for intestinal absorption of bile acids. Capable of thyroid hormone transport (both T3 or 3,3',5'-triiodo-L-thyronine, and T4 or L-tyroxine). Plays roles in blood-brain and -cerebrospinal fluid barrier transport of organic anions and signal mediators, and in hormone uptake by neural cells. May also play a role in the reuptake of neuropeptides such as substance P/TAC1 and vasoactive intestinal peptide/VIP released from retinal neurons. Shows a pH-sensitive substrate specificity which may be ascribed to the protonation state of the binding site and leads to a stimulation of substrate transport in an acidic microenvironment. Hydrogencarbonate/HCO3(-) acts as the probable counteranion that exchanges for organic anions. May contribute to regulate the transport of organic compounds in testis across the blood-testis-barrier. In Mus musculus (Mouse), this protein is Solute carrier organic anion transporter family member 1A5 (Slco1a5).